Here is a 650-residue protein sequence, read N- to C-terminus: Solute carrier family 23 member 2 (650 aa).

Over residues 1-20 (MMGIGKNTTSKSMEAGSSTE) the composition is skewed to polar residues. A disordered region spans residues 1-21 (MMGIGKNTTSKSMEAGSSTEG). The Cytoplasmic segment spans residues 9-110 (TSKSMEAGSS…LCIFLGLQHY (102 aa)). Ser70 is subject to Phosphoserine. The residue at position 75 (Thr75) is a Phosphothreonine. Ser78 bears the Phosphoserine mark. Position 79 is a phosphothreonine (Thr79). Position 81 is a phosphoserine (Ser81). A helical transmembrane segment spans residues 111 to 131 (LTCFSGTIAVPFLLADAMCVG). Topologically, residues 132–139 (YDQWATSQ) are extracellular. A helical transmembrane segment spans residues 140 to 160 (LIGTIFFCVGITTLLQTTFGC). Position 161 (Arg161) is a topological domain, cytoplasmic. Residues 162-182 (LPLFQASAFAFLAPARAILSL) form a helical membrane-spanning segment. Topologically, residues 183–218 (DKWKCNTTDVSVANGTAELLHTEHIWYPRIREIQGA) are extracellular. 2 N-linked (GlcNAc...) asparagine glycosylation sites follow: Asn188 and Asn196. A helical membrane pass occupies residues 219–239 (IIMSSLIEVVIGLLGLPGALL). At 240-266 (KYIGPLTITPTVALIGLSGFQAAGERA) the chain is on the cytoplasmic side. Residues 267–284 (GKHWGIAMLTIFLVLLFS) form a helical membrane-spanning segment. Over 285–288 (QYAR) the chain is Extracellular. An intramembrane region (helical) is located at residues 289-302 (NVKFPLPIYKSKKG). Residues 303-309 (WTAYKLQ) lie on the Extracellular side of the membrane. The chain crosses the membrane as a helical span at residues 310 to 330 (LFKMFPIILAILVSWLLCFIF). At 331 to 371 (TVTDVFPPDSTKYGFYARTDARQGVLLVAPWFKVPYPFQWG) the chain is on the cytoplasmic side. A helical membrane pass occupies residues 372–392 (LPTVSAAGVIGMLSAVVASII). The Extracellular portion of the chain corresponds to 393 to 417 (ESIGDYYACARLSCAPPPPIHAINR). The chain crosses the membrane as a helical span at residues 418–438 (GIFVEGLSCVLDGIFGTGNGS). The Cytoplasmic portion of the chain corresponds to 439–461 (TSSSPNIGVLGITKVGSRRVIQC). A helical transmembrane segment spans residues 462–482 (GAALMLALGMIGKFSALFASL). Residues 483 to 485 (PDP) are Extracellular-facing. A helical membrane pass occupies residues 486–506 (VLGALFCTLFGMITAVGLSNL). Residues 507 to 516 (QFIDLNSSRN) lie on the Cytoplasmic side of the membrane. Residues 517–537 (LFVLGFSIFFGLVLPSYLRQN) form a helical membrane-spanning segment. At 538–547 (PLVTGITGID) the chain is on the extracellular side. Residues 548-568 (QVLNVLLTTAMFVGGCVAFIL) traverse the membrane as a helical segment. Residues 569–650 (DNTIPGTPEE…SSDEDSQATG (82 aa)) lie on the Cytoplasmic side of the membrane. Thr649 bears the Phosphothreonine mark.

Belongs to the nucleobase:cation symporter-2 (NCS2) (TC 2.A.40) family. In terms of assembly, interacts with CLSTN3. Phosphorylated. Ubiquitous.

It is found in the cell membrane. It catalyses the reaction L-ascorbate(out) + 2 Na(+)(out) = L-ascorbate(in) + 2 Na(+)(in). Its function is as follows. Sodium/ascorbate cotransporter. Mediates electrogenic uptake of vitamin C, with a stoichiometry of 2 Na(+) for each ascorbate. This chain is Solute carrier family 23 member 2 (SLC23A2), found in Homo sapiens (Human).